A 204-amino-acid polypeptide reads, in one-letter code: Lipoprotein signal peptidase (204 aa).

The segment at 1-42 (MAEAERIIGTPDIPDAAGEGQERPDADPEREQQEQEQAPERT) is disordered. Residues 20 to 42 (GQERPDADPEREQQEQEQAPERT) show a composition bias toward basic and acidic residues. 3 helical membrane-spanning segments follow: residues 50-70 (VLFA…MLVV), 100-120 (FGEA…VVIA), and 126-146 (LHSL…LGNL). Catalysis depends on residues aspartate 163 and aspartate 177. A helical membrane pass occupies residues 170–190 (FAVFNLADSAIVCGGILIVIL).

This sequence belongs to the peptidase A8 family.

It localises to the cell membrane. The catalysed reaction is Release of signal peptides from bacterial membrane prolipoproteins. Hydrolyzes -Xaa-Yaa-Zaa-|-(S,diacylglyceryl)Cys-, in which Xaa is hydrophobic (preferably Leu), and Yaa (Ala or Ser) and Zaa (Gly or Ala) have small, neutral side chains.. Its pathway is protein modification; lipoprotein biosynthesis (signal peptide cleavage). Its function is as follows. This protein specifically catalyzes the removal of signal peptides from prolipoproteins. In Streptomyces coelicolor (strain ATCC BAA-471 / A3(2) / M145), this protein is Lipoprotein signal peptidase.